Here is a 348-residue protein sequence, read N- to C-terminus: Histidinol-phosphate aminotransferase (348 aa).

The interval 1–31 is disordered; the sequence is MLPTRDCVRQTPAYTPGEQPQTAGFTKLNTN. Residues 18–31 show a composition bias toward polar residues; it reads EQPQTAGFTKLNTN. At Lys-207 the chain carries N6-(pyridoxal phosphate)lysine.

The protein belongs to the class-II pyridoxal-phosphate-dependent aminotransferase family. Histidinol-phosphate aminotransferase subfamily. Homodimer. Pyridoxal 5'-phosphate is required as a cofactor.

The enzyme catalyses L-histidinol phosphate + 2-oxoglutarate = 3-(imidazol-4-yl)-2-oxopropyl phosphate + L-glutamate. It functions in the pathway amino-acid biosynthesis; L-histidine biosynthesis; L-histidine from 5-phospho-alpha-D-ribose 1-diphosphate: step 7/9. This Microcystis aeruginosa (strain NIES-843 / IAM M-2473) protein is Histidinol-phosphate aminotransferase.